Here is a 610-residue protein sequence, read N- to C-terminus: Glutamine--fructose-6-phosphate aminotransferase [isomerizing] (610 aa).

The Nucleophile; for GATase activity role is filled by Cys2. Residues 2–219 form the Glutamine amidotransferase type-2 domain; sequence CGIVGATSER…EGDVADINRT (218 aa). SIS domains are found at residues 287 to 427 and 459 to 600; these read AADI…YRGM and LAQD…VDQP. Residue Lys605 is the For Fru-6P isomerization activity of the active site.

Homodimer.

Its subcellular location is the cytoplasm. The enzyme catalyses D-fructose 6-phosphate + L-glutamine = D-glucosamine 6-phosphate + L-glutamate. Its function is as follows. Catalyzes the first step in hexosamine metabolism, converting fructose-6P into glucosamine-6P using glutamine as a nitrogen source. This Idiomarina loihiensis (strain ATCC BAA-735 / DSM 15497 / L2-TR) protein is Glutamine--fructose-6-phosphate aminotransferase [isomerizing].